A 270-amino-acid chain; its full sequence is Aliphatic sulfonates import ATP-binding protein SsuB 1 (270 aa).

The ABC transporter domain occupies 18 to 232; that stretch reads VQLRNVVRQF…DSGQAGFQLI (215 aa). Residue 50–57 coordinates ATP; the sequence is GASGSGKT. The interval 247–270 is disordered; the sequence is PDTAPQASAPDSTFSELRRVASAR. Residues 251-261 show a composition bias toward polar residues; sequence PQASAPDSTFS.

Belongs to the ABC transporter superfamily. Aliphatic sulfonates importer (TC 3.A.1.17.2) family. As to quaternary structure, the complex is composed of two ATP-binding proteins (SsuB), two transmembrane proteins (SsuC) and a solute-binding protein (SsuA).

It localises to the cell inner membrane. The enzyme catalyses ATP + H2O + aliphatic sulfonate-[sulfonate-binding protein]Side 1 = ADP + phosphate + aliphatic sulfonateSide 2 + [sulfonate-binding protein]Side 1.. Part of the ABC transporter complex SsuABC involved in aliphatic sulfonates import. Responsible for energy coupling to the transport system. This chain is Aliphatic sulfonates import ATP-binding protein SsuB 1, found in Pseudomonas syringae pv. tomato (strain ATCC BAA-871 / DC3000).